Consider the following 683-residue polypeptide: ATP-dependent zinc metalloprotease FtsH (683 aa).

A disordered region spans residues 1–43 (MEDKNIKDDEILDDQNDNQEDVQNQDEEKEIKPKKPKKKVYIS). Over 1–70 (MEDKNIKDDE…KNNNISFRVK (70 aa)) the chain is Cytoplasmic. Positions 10 to 28 (EILDDQNDNQEDVQNQDEE) are enriched in acidic residues. Residues 71–91 (PPIFFFLILILMSTLFYFYGN) traverse the membrane as a helical segment. Residues 92–174 (KTALFQEKRE…IVVLGTPVSS (83 aa)) lie on the Periplasmic side of the membrane. The helical transmembrane segment at 175-195 (IITRAIFSFAPLFMLLFFFYF) threads the bilayer. At 196–683 (INKKMMGSSG…LDDEQLEKYY (488 aa)) the chain is on the cytoplasmic side. 270–277 (GEPGTGKT) is a binding site for ATP. Residue H494 participates in Zn(2+) binding. Residue E495 is part of the active site. Zn(2+) contacts are provided by H498 and D569.

The protein in the central section; belongs to the AAA ATPase family. It in the C-terminal section; belongs to the peptidase M41 family. Homohexamer. Zn(2+) is required as a cofactor.

It is found in the cell inner membrane. In terms of biological role, acts as a processive, ATP-dependent zinc metallopeptidase for both cytoplasmic and membrane proteins. Plays a role in the quality control of integral membrane proteins. This chain is ATP-dependent zinc metalloprotease FtsH, found in Streptobacillus moniliformis (strain ATCC 14647 / DSM 12112 / NCTC 10651 / 9901).